The chain runs to 166 residues: NADH-quinone oxidoreductase subunit I (166 aa).

4Fe-4S ferredoxin-type domains follow at residues 57–87 and 97–126; these read LRRY…IESE and TRYD…VTPI. Positions 67, 70, 73, 77, 106, 109, 112, and 116 each coordinate [4Fe-4S] cluster.

Belongs to the complex I 23 kDa subunit family. As to quaternary structure, NDH-1 is composed of 14 different subunits. Subunits NuoA, H, J, K, L, M, N constitute the membrane sector of the complex. It depends on [4Fe-4S] cluster as a cofactor.

The protein resides in the cell inner membrane. The enzyme catalyses a quinone + NADH + 5 H(+)(in) = a quinol + NAD(+) + 4 H(+)(out). Its function is as follows. NDH-1 shuttles electrons from NADH, via FMN and iron-sulfur (Fe-S) centers, to quinones in the respiratory chain. The immediate electron acceptor for the enzyme in this species is believed to be ubiquinone. Couples the redox reaction to proton translocation (for every two electrons transferred, four hydrogen ions are translocated across the cytoplasmic membrane), and thus conserves the redox energy in a proton gradient. The chain is NADH-quinone oxidoreductase subunit I from Legionella pneumophila (strain Lens).